Here is a 293-residue protein sequence, read N- to C-terminus: Pantothenate synthetase (293 aa).

30–37 contributes to the ATP binding site; sequence MGYLHKGH. H37 acts as the Proton donor in catalysis. Q61 is a (R)-pantoate binding site. Residue Q61 coordinates beta-alanine. ATP is bound at residue 147–150; sequence GEKD. Q153 contributes to the (R)-pantoate binding site. Residues V176 and 184-187 each bind ATP; that span reads CSSR.

This sequence belongs to the pantothenate synthetase family. In terms of assembly, homodimer.

The protein localises to the cytoplasm. It carries out the reaction (R)-pantoate + beta-alanine + ATP = (R)-pantothenate + AMP + diphosphate + H(+). The protein operates within cofactor biosynthesis; (R)-pantothenate biosynthesis; (R)-pantothenate from (R)-pantoate and beta-alanine: step 1/1. Functionally, catalyzes the condensation of pantoate with beta-alanine in an ATP-dependent reaction via a pantoyl-adenylate intermediate. In Brucella melitensis biotype 2 (strain ATCC 23457), this protein is Pantothenate synthetase.